A 662-amino-acid polypeptide reads, in one-letter code: Methionine--tRNA ligase (662 aa).

Residues 14-24 (YYPSGKLHLGS) carry the 'HIGH' region motif. A 'KMSKS' region motif is present at residues 308-312 (KMSKS). Lysine 311 serves as a coordination point for ATP. Residues 559-662 (DFEKIELKVA…DDVPAGSLIG (104 aa)) form the tRNA-binding domain.

The protein belongs to the class-I aminoacyl-tRNA synthetase family. MetG type 2B subfamily. As to quaternary structure, homodimer.

The protein localises to the cytoplasm. The enzyme catalyses tRNA(Met) + L-methionine + ATP = L-methionyl-tRNA(Met) + AMP + diphosphate. In terms of biological role, is required not only for elongation of protein synthesis but also for the initiation of all mRNA translation through initiator tRNA(fMet) aminoacylation. The sequence is that of Methionine--tRNA ligase (metG) from Lactococcus lactis subsp. lactis (strain IL1403) (Streptococcus lactis).